The primary structure comprises 363 residues: 3,4-dihydroxy-2-butanone 4-phosphate synthase (363 aa).

The segment at 1–202 (MSHISPIPEI…ITDLIEYRSR (202 aa)) is DHBP synthase. Residues 28–29 (RE), D33, 141–145 (RAGHT), and E165 each bind D-ribulose 5-phosphate. Position 29 (E29) interacts with Mg(2+). A Mg(2+)-binding site is contributed by H144. The segment at 205-363 (SLLEDMGNAP…EVVGFEEAEK (159 aa)) is GTP cyclohydrolase II-like.

This sequence in the N-terminal section; belongs to the DHBP synthase family. In the C-terminal section; belongs to the GTP cyclohydrolase II family. The cofactor is Mg(2+). Mn(2+) serves as cofactor.

It catalyses the reaction D-ribulose 5-phosphate = (2S)-2-hydroxy-3-oxobutyl phosphate + formate + H(+). It participates in cofactor biosynthesis; riboflavin biosynthesis; 2-hydroxy-3-oxobutyl phosphate from D-ribulose 5-phosphate: step 1/1. Functionally, catalyzes the conversion of D-ribulose 5-phosphate to formate and 3,4-dihydroxy-2-butanone 4-phosphate. This chain is 3,4-dihydroxy-2-butanone 4-phosphate synthase (ribB), found in Neisseria meningitidis serogroup A / serotype 4A (strain DSM 15465 / Z2491).